Here is a 78-residue protein sequence, read N- to C-terminus: Transmembrane protein 258 (78 aa).

The Cytoplasmic segment spans residues 1-18 (MDVMQRYVSPVNPAVFPH). The helical transmembrane segment at 19-39 (LATVLLVIGTFFTAWFFIFVV) threads the bilayer. Over 40 to 53 (SRKSSKESTLIKEL) the chain is Cytoplasmic. The chain crosses the membrane as a helical span at residues 54–74 (LISLCASIFLGFGIVFLLLTV). Over 75–78 (GIYV) the chain is Perinuclear space.

This sequence belongs to the OST5 family. In terms of assembly, homodimer. Component of the oligosaccharyltransferase (OST) complex. Interacts with klar and Msp300, components of LINC complex.

The protein resides in the nucleus outer membrane. The protein localises to the cytoplasm. It is found in the endoplasmic reticulum membrane. Functionally, subunit of the oligosaccharyl transferase (OST) complex that catalyzes the initial transfer of a defined glycan (Glc(3)Man(9)GlcNAc(2) in eukaryotes) from the lipid carrier dolichol-pyrophosphate to an asparagine residue within an Asn-X-Ser/Thr consensus motif in nascent polypeptide chains, the first step in protein N-glycosylation. N-glycosylation occurs cotranslationally and the complex associates with the Sec61 complex at the channel-forming translocon complex that mediates protein translocation across the endoplasmic reticulum (ER). All subunits are required for a maximal enzyme activity. In addition may regulates nuclear envelope (NE) architecture and nuclear positioning through the linker of nucleoskeleton and cytoskeleton (LINC)-dependent and -independent mechanisms. This chain is Transmembrane protein 258, found in Drosophila melanogaster (Fruit fly).